The chain runs to 241 residues: Probable transcriptional regulatory protein Mpe_A1337 (241 aa).

A disordered region spans residues 1–20 (MAGHSKWANIQHRKGRQDEK).

The protein belongs to the TACO1 family.

It localises to the cytoplasm. This chain is Probable transcriptional regulatory protein Mpe_A1337, found in Methylibium petroleiphilum (strain ATCC BAA-1232 / LMG 22953 / PM1).